The sequence spans 790 residues: Lysine biosynthesis regulatory protein LYS14 (790 aa).

Disordered regions lie at residues M1–E50 and F72–N157. A compositionally biased stretch (low complexity) spans S35–S47. Polar residues-rich tracts occupy residues K75–D113 and T120–V142. The segment at residues C159 to C186 is a DNA-binding region (zn(2)-C6 fungal-type). Residues K195 to N258 form a disordered region. Positions A222–R239 are enriched in basic residues.

The protein resides in the nucleus. Functionally, activates the transcription of lysine biosynthesis genes. This activation is dependent on the inducer alpha-aminoadipate semialdehyde and repressed by lysine. The sequence is that of Lysine biosynthesis regulatory protein LYS14 (LYS14) from Saccharomyces cerevisiae (strain ATCC 204508 / S288c) (Baker's yeast).